The sequence spans 69 residues: Cytochrome c oxidase subunit 8A, mitochondrial (69 aa).

A mitochondrion-targeting transit peptide spans 1–25; the sequence is MSSLTPLLLRSLTGPARRLMVPRAQ. Residues 2 to 19 carry the SIFI-degron motif; that stretch reads SSLTPLLLRSLTGPARRL. Residues 26–36 are Mitochondrial matrix-facing; it reads VHSKPPREQLG. The helical transmembrane segment at 37–60 threads the bilayer; that stretch reads VLDITIGLTSCFVCCLLPAGWVLS. The Mitochondrial intermembrane segment spans residues 61 to 69; that stretch reads HLESYKKRE.

This sequence belongs to the cytochrome c oxidase VIII family. As to quaternary structure, component of the cytochrome c oxidase (complex IV, CIV), a multisubunit enzyme composed of 14 subunits. The complex is composed of a catalytic core of 3 subunits MT-CO1, MT-CO2 and MT-CO3, encoded in the mitochondrial DNA, and 11 supernumerary subunits COX4I, COX5A, COX5B, COX6A, COX6B, COX6C, COX7A, COX7B, COX7C, COX8 and NDUFA4, which are encoded in the nuclear genome. The complex exists as a monomer or a dimer and forms supercomplexes (SCs) in the inner mitochondrial membrane with NADH-ubiquinone oxidoreductase (complex I, CI) and ubiquinol-cytochrome c oxidoreductase (cytochrome b-c1 complex, complex III, CIII), resulting in different assemblies (supercomplex SCI(1)III(2)IV(1) and megacomplex MCI(2)III(2)IV(2)). Post-translationally, in response to mitochondrial stress, the precursor protein is ubiquitinated by the SIFI complex in the cytoplasm before mitochondrial import, leading to its degradation. Within the SIFI complex, UBR4 initiates ubiquitin chain that are further elongated or branched by KCMF1.

The protein localises to the mitochondrion inner membrane. Its pathway is energy metabolism; oxidative phosphorylation. Component of the cytochrome c oxidase, the last enzyme in the mitochondrial electron transport chain which drives oxidative phosphorylation. The respiratory chain contains 3 multisubunit complexes succinate dehydrogenase (complex II, CII), ubiquinol-cytochrome c oxidoreductase (cytochrome b-c1 complex, complex III, CIII) and cytochrome c oxidase (complex IV, CIV), that cooperate to transfer electrons derived from NADH and succinate to molecular oxygen, creating an electrochemical gradient over the inner membrane that drives transmembrane transport and the ATP synthase. Cytochrome c oxidase is the component of the respiratory chain that catalyzes the reduction of oxygen to water. Electrons originating from reduced cytochrome c in the intermembrane space (IMS) are transferred via the dinuclear copper A center (CU(A)) of subunit 2 and heme A of subunit 1 to the active site in subunit 1, a binuclear center (BNC) formed by heme A3 and copper B (CU(B)). The BNC reduces molecular oxygen to 2 water molecules using 4 electrons from cytochrome c in the IMS and 4 protons from the mitochondrial matrix. The polypeptide is Cytochrome c oxidase subunit 8A, mitochondrial (Cox8a) (Rattus norvegicus (Rat)).